A 404-amino-acid polypeptide reads, in one-letter code: Argininosuccinate synthase (404 aa).

ATP contacts are provided by residues 12–20 and A39; that span reads AYSGGLDTS. Positions 90 and 95 each coordinate L-citrulline. G120 contributes to the ATP binding site. 3 residues coordinate L-aspartate: T122, N126, and D127. L-citrulline is bound at residue N126. L-citrulline contacts are provided by R130, S181, S190, E266, and Y278.

It belongs to the argininosuccinate synthase family. Type 1 subfamily. Homotetramer.

It is found in the cytoplasm. It catalyses the reaction L-citrulline + L-aspartate + ATP = 2-(N(omega)-L-arginino)succinate + AMP + diphosphate + H(+). It participates in amino-acid biosynthesis; L-arginine biosynthesis; L-arginine from L-ornithine and carbamoyl phosphate: step 2/3. The polypeptide is Argininosuccinate synthase (Rhodospirillum rubrum (strain ATCC 11170 / ATH 1.1.1 / DSM 467 / LMG 4362 / NCIMB 8255 / S1)).